A 4349-amino-acid polypeptide reads, in one-letter code: Dynein heavy chain, cytoplasmic (4349 aa).

The interval 1-1907 (MEVTSAAAPS…YIKMANAKLN (1907 aa)) is stem. 6 coiled-coil regions span residues 459-480 (WEENVKEFTNVAREVTRRRNEK), 1178-1215 (LMKFASRLGNRMREINAEIEKARKHLESQSSDASSTAQ), 1266-1293 (SQWEALKEILEKKSRIVQDQTDALQAKI), 1334-1354 (ESRISKLQDDAQMVAKAKEAL), 1560-1577 (YKEFEEEAVAWEDKLNRV), and 1640-1670 (NIPNVQKSLERLAEMLNKIQKALGEYLEKER). AAA stretches follow at residues 1908–2133 (YGFE…VLVS), 2201–2459 (NAIR…FTTA), 2565–2814 (EVNT…WVRG), and 2908–3177 (TFCE…QGKV). 1946–1953 (GPAGTGKT) serves as a coordination point for ATP. The stretch at 2194–2217 (ANLEALENAIRELAAERHLVVNEL) forms a coiled coil. Residues 2239–2246 (GNSGSGKS), 2604–2611 (GPPGSGKT), and 2946–2953 (GVSGSGKT) contribute to the ATP site. Coiled-coil stretches lie at residues 3186-3294 (LDFV…LAKA), 3420-3477 (GPLK…EMSR), and 3774-3807 (DNVIETLETLKTEAAEISAKMSNTEGVMAEVEEI). The interval 3186 to 3477 (LDFVTQYIKL…TQAIKAEMSR (292 aa)) is stalk. AAA regions lie at residues 3563–3792 (LSTA…EISA) and 4001–4213 (AERF…IVDT).

Belongs to the dynein heavy chain family. As to quaternary structure, consists of at least two heavy chains and a number of intermediate and light chains.

The protein localises to the cytoplasm. The protein resides in the cytoskeleton. Functionally, cytoplasmic dynein acts as a motor for the intracellular retrograde motility of vesicles and organelles along microtubules. Dynein has ATPase activity; the force-producing power stroke is thought to occur on release of ADP. The sequence is that of Dynein heavy chain, cytoplasmic (DHC1) from Fusarium vanettenii (Neocosmospora pisi).